We begin with the raw amino-acid sequence, 218 residues long: Twisted gastrulation protein homolog 1-B (218 aa).

Residues 1 to 25 (MKPSFLHIPAAALLLCSLWILPIHC) form the signal peptide. Residues Asn-52, Asn-81, and Asn-147 are each glycosylated (N-linked (GlcNAc...) asparagine).

This sequence belongs to the twisted gastrulation protein family. In terms of assembly, binds directly to bmp2, bmp4 and bmp7 and can form a ternary complex with bmps and chordin, thus preventing the binding of bmps to their cell surface receptors.

It is found in the secreted. In terms of biological role, involved in dorsal-ventral patterning, permitting peak BMP signaling by antagonizing the residual anti-BMP activity of the cleavage products of chrd. Functions to promote the formation of ventral mesoderm by increasing the activity of bmp7 and other BMPS. Seems to antagonize BMP signaling by forming ternary complexes with chrd and BMPs, thereby preventing BMPs from binding to their receptors. In addition to the anti-BMP function, also has pro-BMP activity, partly mediated by cleavage and degradation of chrd, which releases BMPs from ternary complexes. May be an important modulator of BMP-regulated cartilage development and chondrocyte differentiation. The polypeptide is Twisted gastrulation protein homolog 1-B (twsg1-b) (Xenopus laevis (African clawed frog)).